The sequence spans 329 residues: Ketol-acid reductoisomerase (NADP(+)) (329 aa).

Residues 2-182 enclose the KARI N-terminal Rossmann domain; the sequence is TQLFYDTDAD…GGTRAGILET (181 aa). NADP(+) is bound by residues 25 to 28, serine 51, serine 53, and 83 to 86; these read YGSQ and DEFQ. Residue histidine 108 is part of the active site. An NADP(+)-binding site is contributed by glycine 134. Positions 183–328 constitute a KARI C-terminal knotted domain; the sequence is NFKEETETDL…KGLRAMFSWL (146 aa). Positions 191, 195, 227, and 231 each coordinate Mg(2+). Serine 252 lines the substrate pocket.

It belongs to the ketol-acid reductoisomerase family. The cofactor is Mg(2+).

It catalyses the reaction (2R)-2,3-dihydroxy-3-methylbutanoate + NADP(+) = (2S)-2-acetolactate + NADPH + H(+). The catalysed reaction is (2R,3R)-2,3-dihydroxy-3-methylpentanoate + NADP(+) = (S)-2-ethyl-2-hydroxy-3-oxobutanoate + NADPH + H(+). Its pathway is amino-acid biosynthesis; L-isoleucine biosynthesis; L-isoleucine from 2-oxobutanoate: step 2/4. It functions in the pathway amino-acid biosynthesis; L-valine biosynthesis; L-valine from pyruvate: step 2/4. Functionally, involved in the biosynthesis of branched-chain amino acids (BCAA). Catalyzes an alkyl-migration followed by a ketol-acid reduction of (S)-2-acetolactate (S2AL) to yield (R)-2,3-dihydroxy-isovalerate. In the isomerase reaction, S2AL is rearranged via a Mg-dependent methyl migration to produce 3-hydroxy-3-methyl-2-ketobutyrate (HMKB). In the reductase reaction, this 2-ketoacid undergoes a metal-dependent reduction by NADPH to yield (R)-2,3-dihydroxy-isovalerate. This chain is Ketol-acid reductoisomerase (NADP(+)), found in Prochlorococcus marinus subsp. pastoris (strain CCMP1986 / NIES-2087 / MED4).